The chain runs to 399 residues: S-adenosylmethionine synthase (399 aa).

Residue His-15 coordinates ATP. Mg(2+) is bound at residue Asp-17. Glu-43 provides a ligand contact to K(+). L-methionine-binding residues include Glu-56 and Gln-99. The interval 99–109 is flexible loop; sequence QSPDIARGVNR. ATP-binding positions include 166–168, 232–233, Asp-241, 247–248, Ala-264, and Lys-268; these read DAK, RF, and RK. Residue Asp-241 participates in L-methionine binding. An L-methionine-binding site is contributed by Lys-272.

It belongs to the AdoMet synthase family. Homotetramer; dimer of dimers. It depends on Mg(2+) as a cofactor. K(+) serves as cofactor.

It localises to the cytoplasm. It catalyses the reaction L-methionine + ATP + H2O = S-adenosyl-L-methionine + phosphate + diphosphate. It participates in amino-acid biosynthesis; S-adenosyl-L-methionine biosynthesis; S-adenosyl-L-methionine from L-methionine: step 1/1. Catalyzes the formation of S-adenosylmethionine (AdoMet) from methionine and ATP. The overall synthetic reaction is composed of two sequential steps, AdoMet formation and the subsequent tripolyphosphate hydrolysis which occurs prior to release of AdoMet from the enzyme. This Nitrosospira multiformis (strain ATCC 25196 / NCIMB 11849 / C 71) protein is S-adenosylmethionine synthase.